The following is a 128-amino-acid chain: Insulin-like growth factor 2 (128 aa).

An N-terminal signal peptide occupies residues 1-24 (MGISMGKSMLVLLTFLAFASCCIA). Positions 25–52 (AYRPSETLCGGELVDTLQFVCGDRGFYF) are b. Disulfide bonds link cysteine 33–cysteine 71, cysteine 45–cysteine 84, and cysteine 70–cysteine 75. The interval 53–64 (SRPASRVSRRSR) is c. The tract at residues 65–85 (GIVEECCFRSCDLALLETYCA) is a. Residues 86 to 91 (TPAKSE) are d. Positions 92–128 (RDVSASLAVLPDNFPRYPVGKFFQYDTWRQSTQRLRR) are cleaved as a propeptide — e peptide.

This sequence belongs to the insulin family. Interacts with MYORG; this interaction is required for IGF2 secretion. Interacts with integrins ITGAV:ITGB3 and ITGA6:ITGB4; integrin-binding is required for IGF2 signaling. Post-translationally, proteolytically processed by PCSK4, proIGF2 is cleaved at Arg-128 and Arg-92 to generate big-IGF2 and mature IGF2.

It is found in the secreted. The insulin-like growth factors possess growth-promoting activity. Major fetal growth hormone in mammals. Plays a key role in regulating fetoplacental development. IGF2 is influenced by placental lactogen. Also involved in tissue differentiation. In adults, involved in glucose metabolism in adipose tissue, skeletal muscle and liver. Acts as a ligand for integrin which is required for IGF2 signaling. Positively regulates myogenic transcription factor MYOD1 function by facilitating the recruitment of transcriptional coactivators, thereby controlling muscle terminal differentiation. Inhibits myoblast differentiation and metabolism via increasing the mitochondrial respiration rate. In terms of biological role, preptin undergoes glucose-mediated co-secretion with insulin, and acts as a physiological amplifier of glucose-mediated insulin secretion. Exhibits osteogenic properties by increasing osteoblast mitogenic activity through phosphoactivation of MAPK1 and MAPK3. This chain is Insulin-like growth factor 2, found in Cavia porcellus (Guinea pig).